The chain runs to 781 residues: Dynamin-related protein dnm1 (781 aa).

A Dynamin-type G domain is found at Phe23–Pro328. A G1 motif region spans residues Gly33–Ser40. Gly33 to Ser40 contacts GTP. A G2 motif region spans residues Val59 to Arg61. The disordered stretch occupies residues Lys76–Gly103. The interval Asp170–Gly173 is G3 motif. GTP contacts are provided by residues Asp170–Leu174 and Thr239–Asp242. A G4 motif region spans residues Thr239–Asp242. The G5 motif stretch occupies residues Val269 to Ser272. The GED domain occupies Val694–Phe781.

This sequence belongs to the TRAFAC class dynamin-like GTPase superfamily. Dynamin/Fzo/YdjA family.

The protein resides in the cytoplasm. Its subcellular location is the mitochondrion outer membrane. The catalysed reaction is GTP + H2O = GDP + phosphate + H(+). Microtubule-associated force-producing protein that mediates mitochondrial fission during interphasic growth and at cell division. Fission of mitochondria occurs in many cell types and constitutes an important step in mitochondria morphology, which is balanced between fusion and fission. With vps1, acts redundantly in peroxisome biogenesis, which is under cell cycle control. The chain is Dynamin-related protein dnm1 (dnm1) from Schizosaccharomyces pombe (strain 972 / ATCC 24843) (Fission yeast).